The chain runs to 231 residues: Large ribosomal subunit protein uL1 (231 aa).

It belongs to the universal ribosomal protein uL1 family. As to quaternary structure, part of the 50S ribosomal subunit.

Its function is as follows. Binds directly to 23S rRNA. The L1 stalk is quite mobile in the ribosome, and is involved in E site tRNA release. Functionally, protein L1 is also a translational repressor protein, it controls the translation of the L11 operon by binding to its mRNA. The polypeptide is Large ribosomal subunit protein uL1 (Methylocella silvestris (strain DSM 15510 / CIP 108128 / LMG 27833 / NCIMB 13906 / BL2)).